The primary structure comprises 512 residues: Kelch repeat protein C2 (512 aa).

Positions 2–67 constitute a BTB domain; it reads ESVIFSINGE…IRWKKINITI (66 aa). Positions 102 to 176 constitute a BACK domain; sequence CIRMFNFSKR…LLKWIHKNPN (75 aa). Kelch repeat units lie at residues 216–261, 262–307, 309–354, 356–403, 405–449, and 452–498; these read IKHN…LHNC, LYII…VNDG, LYVI…FVND, IYVM…EYDG, IYVI…SCGD, and LIIA…THKS.

The protein belongs to the poxviruses Kelch family.

The chain is Kelch repeat protein C2 from Vaccinia virus (strain Western Reserve) (VACV).